The chain runs to 674 residues: Protein asunder (674 aa).

Positions 516 to 538 form a coiled coil; sequence HKAKDQYRLLYRELEQLIQLNAS. Residues 601–607 carry the Nuclear localization signal (NLS) motif; that stretch reads LKASKRR.

The protein belongs to the Integrator subunit 13 family. In terms of assembly, belongs to the multiprotein complex Integrator, at least composed of IntS1, IntS2, IntS3, IntS4, omd/IntS5, IntS6, defl/IntS7, IntS8, IntS9, IntS10, IntS11, IntS12, asun/IntS13, IntS14 and IntS15. The core complex associates with protein phosphatase 2A subunits mts/PP2A and Pp2A-29B, to form the Integrator-PP2A (INTAC) complex. In terms of processing, phosphorylated.

The protein resides in the nucleus. The protein localises to the cytoplasm. It localises to the perinuclear region. Component of the integrator complex, a multiprotein complex that terminates RNA polymerase II (Pol II) transcription in the promoter-proximal region of genes. The integrator complex provides a quality checkpoint during transcription elongation by driving premature transcription termination of transcripts that are unfavorably configured for transcriptional elongation: the complex terminates transcription by (1) catalyzing dephosphorylation of the C-terminal domain (CTD) of Pol II subunit Polr2A/Rbp1 and Spt5, and (2) degrading the exiting nascent RNA transcript via endonuclease activity. The integrator complex is also involved in the 3'-end processing of the U7 snRNA, and also the spliceosomal snRNAs U1, U2, U4 and U5. The chain is Protein asunder (asun) from Drosophila persimilis (Fruit fly).